The following is a 350-amino-acid chain: Renin receptor (350 aa).

An N-terminal signal peptide occupies residues 1–16 (MAVFVVLLALVAGVLG). Over 17–302 (NEFSILKSPG…YNLAYKYNFE (286 aa)) the chain is Extracellular. A helical transmembrane segment spans residues 303–323 (YSVVFNMVLWIMIALALAVII). Residues 324–350 (TSYNIWNMDPGYDSIIYRMTNQKIRMD) lie on the Cytoplasmic side of the membrane. The short motif at 346–350 (KIRMD) is the Mediates retrograde transport to the ER element.

In terms of assembly, interacts with renin. Accessory component of the multisubunit proton-transporting vacuolar (V)-ATPase protein pump. Interacts (via N-terminus) with ATP6AP1 (via N-terminus). Interacts with ATP6V0D1; ATP6V0D1 is a V-ATPase complex subunit and the interaction promotes V-ATPase complex assembly. Interacts with TMEM9; TMEM9 is a V-ATPase assembly regulator and the interaction induces the interaction with ATP6V0D1. Interacts with VMA21 (via N-terminus); VMA21 is a V-ATPase accessory component. Phosphorylated. In terms of processing, proteolytically cleaved by a furin-like convertase in the trans-Golgi network to generate N- and C-terminal fragments. In terms of tissue distribution, expressed in brain, heart, placenta, liver, kidney and pancreas. Barely detectable in lung and skeletal muscles. In the kidney cortex it is restricted to the mesangium of glomeruli. In the coronary and kidney artery it is expressed in the subendothelium, associated to smooth muscles where it colocalizes with REN. Expressed in vascular structures and by syncytiotrophoblast cells in the mature fetal placenta.

The protein localises to the endoplasmic reticulum membrane. Its subcellular location is the lysosome membrane. It localises to the cytoplasmic vesicle. The protein resides in the autophagosome membrane. It is found in the cell projection. The protein localises to the dendritic spine membrane. Its subcellular location is the axon. It localises to the endosome membrane. The protein resides in the clathrin-coated vesicle membrane. It is found in the secretory vesicle. The protein localises to the synaptic vesicle membrane. Functionally, multifunctional protein which functions as a renin, prorenin cellular receptor and is involved in the assembly of the lysosomal proton-transporting V-type ATPase (V-ATPase) and the acidification of the endo-lysosomal system. May mediate renin-dependent cellular responses by activating ERK1 and ERK2. By increasing the catalytic efficiency of renin in AGT/angiotensinogen conversion to angiotensin I, may also play a role in the renin-angiotensin system (RAS). Through its function in V-type ATPase (v-ATPase) assembly and acidification of the lysosome it regulates protein degradation and may control different signaling pathways important for proper brain development, synapse morphology and synaptic transmission. This is Renin receptor from Homo sapiens (Human).